A 591-amino-acid chain; its full sequence is L-fucose isomerase (591 aa).

Catalysis depends on proton acceptor residues Glu-337 and Asp-361. Glu-337, Asp-361, and His-528 together coordinate Mn(2+).

The protein belongs to the L-fucose isomerase family. As to quaternary structure, homohexamer. Mn(2+) is required as a cofactor.

It is found in the cytoplasm. It catalyses the reaction L-fucose = L-fuculose. Its pathway is carbohydrate degradation; L-fucose degradation; L-lactaldehyde and glycerone phosphate from L-fucose: step 1/3. In terms of biological role, converts the aldose L-fucose into the corresponding ketose L-fuculose. This Citrobacter koseri (strain ATCC BAA-895 / CDC 4225-83 / SGSC4696) protein is L-fucose isomerase.